A 432-amino-acid chain; its full sequence is Alcohol acyltransferase 9 (432 aa).

Residues His156 and Asp379 each act as proton acceptor in the active site.

It belongs to the plant acyltransferase family. As to expression, expressed in fruit.

It carries out the reaction 2-(methylsulfanyl)acetyl-CoA + butan-1-ol = butyl 2-(methylsulfanyl)acetate + CoA. It catalyses the reaction ethanol + acetyl-CoA = ethyl acetate + CoA. The enzyme catalyses butan-1-ol + acetyl-CoA = butyl acetate + CoA. The catalysed reaction is butan-1-ol + propanoyl-CoA = butyl propanoate + CoA. Functionally, involved in the biosynthesis of volatile esters which confer kiwifruit flavor. Alcohol acyl transferase that can use a wide range of alcohols as substrate to produce esters. Exhibits acetyl-CoA:alcohol O-acyltransferase activity. This chain is Alcohol acyltransferase 9, found in Actinidia eriantha (Velvet vine).